Here is a 130-residue protein sequence, read N- to C-terminus: Lysozyme C (130 aa).

The 130-residue stretch at 1-130 (KTYERCELAR…VSPWIRDCGL (130 aa)) folds into the C-type lysozyme domain. Disulfide bonds link Cys-6–Cys-128, Cys-30–Cys-116, Cys-65–Cys-81, and Cys-77–Cys-95. Catalysis depends on residues Glu-35 and Asp-53.

Belongs to the glycosyl hydrolase 22 family. In terms of assembly, monomer.

The protein localises to the secreted. The enzyme catalyses Hydrolysis of (1-&gt;4)-beta-linkages between N-acetylmuramic acid and N-acetyl-D-glucosamine residues in a peptidoglycan and between N-acetyl-D-glucosamine residues in chitodextrins.. Functionally, lysozymes have primarily a bacteriolytic function; those in tissues and body fluids are associated with the monocyte-macrophage system and enhance the activity of immunoagents. This chain is Lysozyme C (LYZ), found in Chelonia mydas (Green sea-turtle).